Here is a 315-residue protein sequence, read N- to C-terminus: Ribosomal RNA small subunit methyltransferase H (315 aa).

Residues 37–39 (GGH), aspartate 57, phenylalanine 83, aspartate 105, and glutamine 112 each bind S-adenosyl-L-methionine. The disordered stretch occupies residues 296-315 (EVKANPRSRSAVMRVAEKVR).

Belongs to the methyltransferase superfamily. RsmH family.

Its subcellular location is the cytoplasm. It catalyses the reaction cytidine(1402) in 16S rRNA + S-adenosyl-L-methionine = N(4)-methylcytidine(1402) in 16S rRNA + S-adenosyl-L-homocysteine + H(+). Specifically methylates the N4 position of cytidine in position 1402 (C1402) of 16S rRNA. This chain is Ribosomal RNA small subunit methyltransferase H, found in Stutzerimonas stutzeri (strain A1501) (Pseudomonas stutzeri).